We begin with the raw amino-acid sequence, 1004 residues long: Receptor-type tyrosine-protein phosphatase N2 (1004 aa).

An N-terminal signal peptide occupies residues 1–27 (MGLPLPLLLLLLLPPPLPRALPAPASA). Residues 1–409 (MGLPLPLLLL…PEAPLLEKSS (409 aa)) form an involved in localization to secretory granules; interaction with CPE region. Over 28-603 (RGRQLPGRLG…HPEEQEDSTK (576 aa)) the chain is Extracellular. Arg-259 is subject to Omega-N-methylarginine. Disordered regions lie at residues 274 to 294 (APAL…SLSM), 333 to 360 (QSDP…DAPE), and 393 to 459 (DHGS…WRLE). A Phosphoserine modification is found at Ser-340. Basic and acidic residues-rich tracts occupy residues 341 to 356 (QESH…REQA) and 407 to 418 (KSSRAEMKKSEQ). Residues 419 to 430 (PEEVLSSEEETA) are compositionally biased toward acidic residues. Ser-424 and Ser-425 each carry phosphoserine. A compositionally biased stretch (basic and acidic residues) spans 431–450 (GVEHVKSRTYSKDLLERKPN). Asn-553 carries N-linked (GlcNAc...) asparagine glycosylation. The helical transmembrane segment at 604–624 (FIVLTFLSIACILAVLLASSL) threads the bilayer. Over 625-1004 (AYCLRHNSHY…VNAILKALPQ (380 aa)) the chain is Cytoplasmic. A Tyrosine-based internalization motif motif is present at residues 655 to 664 (YQELCRQRMA). Residues 665 to 710 (VRPQDHSEGPHTSRINSVSSQLSDGPMPSPSARSSTSSWSEEPAQS) are disordered. Over residues 677–687 (SRINSVSSQLS) the composition is skewed to polar residues. Ser-681 carries the post-translational modification Phosphoserine; by PKA. At Ser-687 the chain carries Phosphoserine. Residues 694-710 (PSARSSTSSWSEEPAQS) are compositionally biased toward low complexity. Position 700 is a phosphothreonine; by PKA (Thr-700). A Tyrosine-protein phosphatase domain is found at 734–994 (LEKEWEALCA…EFALTAVAEE (261 aa)). Substrate-binding positions include Asp-902 and 934–940 (CSDGAGR). Residue Cys-934 is the Phosphocysteine intermediate of the active site. At Lys-959 the chain carries N6-acetyllysine. Substrate is bound at residue Gln-979. The Leucine-based sorting signal motif lies at 993–999 (EEVNAIL).

It belongs to the protein-tyrosine phosphatase family. Receptor class 8 subfamily. In terms of assembly, self-associates. Interacts (via cytoplasmic domain) with PTPRN (via cytoplasmic domain). Interacts (precursor form) with CPE. Interacts with HAP1. Interacts with AP2A1 or AP2A2 and AP1G1; indicative for an association with adaptor protein complex 2 (AP-2) and adaptor protein complex 1 (AP-1). Interacts with AP2M1; indicative for an association with adaptor protein complex 2 (AP-2). Interacts with MYO5A. Subject to proteolytic cleavage at multiple sites.

The protein resides in the cytoplasmic vesicle. It localises to the secretory vesicle membrane. Its subcellular location is the secretory vesicle. The protein localises to the synaptic vesicle membrane. It carries out the reaction O-phospho-L-tyrosyl-[protein] + H2O = L-tyrosyl-[protein] + phosphate. Its function is as follows. Plays a role in vesicle-mediated secretory processes. Required for normal accumulation of secretory vesicles in hippocampus, pituitary and pancreatic islets. Required for the accumulation of normal levels of insulin-containing vesicles and preventing their degradation. Plays a role in insulin secretion in response to glucose stimuli. Required for normal accumulation of the neurotransmitters norepinephrine, dopamine and serotonin in the brain. In females, but not in males, required for normal accumulation and secretion of pituitary hormones, such as luteinizing hormone (LH) and follicle-stimulating hormone (FSH). Required to maintain normal levels of renin expression and renin release. May regulate catalytic active protein-tyrosine phosphatases such as PTPRA through dimerization. Has phosphatidylinositol phosphatase activity; the PIPase activity is involved in its ability to regulate insulin secretion. Can dephosphorylate phosphatidylinositol 4,5-biphosphate, phosphatidylinositol 5-phosphate and phosphatidylinositol 3-phosphate. Regulates PI(4,5)P2 level in the plasma membrane and localization of cofilin at the plasma membrane and thus is indirectly involved in regulation of actin dynamics related to cell migration and metastasis; upon hydrolysis of PI(4,5)P2 cofilin is released from the plasma membrane and acts in the cytoplasm in severing F-actin filaments. The polypeptide is Receptor-type tyrosine-protein phosphatase N2 (Ptprn2) (Rattus norvegicus (Rat)).